The chain runs to 30 residues: Photosystem I reaction center subunit XII (30 aa).

The chain crosses the membrane as a helical span at residues 7 to 29 (VYIALMAALLASVLAIRLGATLY).

Belongs to the PsaM family.

It is found in the plastid. The protein resides in the chloroplast thylakoid membrane. This chain is Photosystem I reaction center subunit XII, found in Thalassiosira pseudonana (Marine diatom).